Reading from the N-terminus, the 318-residue chain is UDP-3-O-acylglucosamine N-acyltransferase (318 aa).

Residue His-231 is the Proton acceptor of the active site.

This sequence belongs to the transferase hexapeptide repeat family. LpxD subfamily. As to quaternary structure, homotrimer.

It carries out the reaction a UDP-3-O-[(3R)-3-hydroxyacyl]-alpha-D-glucosamine + a (3R)-hydroxyacyl-[ACP] = a UDP-2-N,3-O-bis[(3R)-3-hydroxyacyl]-alpha-D-glucosamine + holo-[ACP] + H(+). It functions in the pathway bacterial outer membrane biogenesis; LPS lipid A biosynthesis. Catalyzes the N-acylation of UDP-3-O-acylglucosamine using 3-hydroxyacyl-ACP as the acyl donor. Is involved in the biosynthesis of lipid A, a phosphorylated glycolipid that anchors the lipopolysaccharide to the outer membrane of the cell. The sequence is that of UDP-3-O-acylglucosamine N-acyltransferase from Campylobacter jejuni subsp. doylei (strain ATCC BAA-1458 / RM4099 / 269.97).